Here is a 476-residue protein sequence, read N- to C-terminus: Cysteine--tRNA ligase (476 aa).

Zn(2+) is bound at residue Cys29. Positions 31-41 match the 'HIGH' region motif; that stretch reads PTVYDYPHLGH. Zn(2+)-binding residues include Cys209, His234, and Glu238. Positions 266 to 270 match the 'KMSKS' region motif; sequence KMSKS. An ATP-binding site is contributed by Lys269.

Belongs to the class-I aminoacyl-tRNA synthetase family. Zn(2+) serves as cofactor.

It is found in the cytoplasm. It carries out the reaction tRNA(Cys) + L-cysteine + ATP = L-cysteinyl-tRNA(Cys) + AMP + diphosphate. This Pyrococcus horikoshii (strain ATCC 700860 / DSM 12428 / JCM 9974 / NBRC 100139 / OT-3) protein is Cysteine--tRNA ligase (cysS).